A 648-amino-acid polypeptide reads, in one-letter code: Macrolide export ATP-binding/permease protein MacB (648 aa).

One can recognise an ABC transporter domain in the interval 6-251; that stretch reads IRVRGVSRAF…GPSAGWRGAI (246 aa). 42-49 contributes to the ATP binding site; it reads GASGSGKS. Helical transmembrane passes span 273–293, 528–548, 572–592, and 613–633; these read LLTM…SALG, VAVI…LVSV, FLIE…MLAL, and SIIV…FLPA.

Belongs to the ABC transporter superfamily. Macrolide exporter (TC 3.A.1.122) family. In terms of assembly, homodimer.

It localises to the cell inner membrane. Non-canonical ABC transporter that contains transmembrane domains (TMD), which form a pore in the inner membrane, and an ATP-binding domain (NBD), which is responsible for energy generation. Confers resistance against macrolides. This Agrobacterium fabrum (strain C58 / ATCC 33970) (Agrobacterium tumefaciens (strain C58)) protein is Macrolide export ATP-binding/permease protein MacB.